The sequence spans 644 residues: Pesticidal crystal protein Cry3Aa (644 aa).

A compositionally biased stretch (basic and acidic residues) spans 1–13 (MNPNNRSEHDTIK). The interval 1 to 20 (MNPNNRSEHDTIKTTENNEV) is disordered. Positions 1–57 (MNPNNRSEHDTIKTTENNEVPTNHVQYPLAETPNPTLEDLNYKEFLRMTADNNTEAL) are cleaved as a propeptide — removed in mature form.

Belongs to the delta endotoxin family.

Promotes colloidosmotic lysis by binding to the midgut epithelial cells of Coleoptera. The chain is Pesticidal crystal protein Cry3Aa (cry3Aa) from Bacillus thuringiensis subsp. san diego.